The sequence spans 364 residues: Small ribosomal subunit biogenesis GTPase RsgA (364 aa).

The region spanning 101–264 (KGLVEKPGVP…VIDTPGLREL (164 aa)) is the CP-type G domain. GTP-binding positions include 154–157 (NKSD) and 206–214 (GSSGAGKST). Zn(2+) contacts are provided by Cys-288, Cys-293, His-295, and Cys-301. The disordered stretch occupies residues 339–364 (QVAQKRKRKTIPRQGKRWRREHGDGQ). Positions 342-358 (QKRKRKTIPRQGKRWRR) are enriched in basic residues.

It belongs to the TRAFAC class YlqF/YawG GTPase family. RsgA subfamily. Monomer. Associates with 30S ribosomal subunit, binds 16S rRNA. Zn(2+) serves as cofactor.

It is found in the cytoplasm. One of several proteins that assist in the late maturation steps of the functional core of the 30S ribosomal subunit. Helps release RbfA from mature subunits. May play a role in the assembly of ribosomal proteins into the subunit. Circularly permuted GTPase that catalyzes slow GTP hydrolysis, GTPase activity is stimulated by the 30S ribosomal subunit. The protein is Small ribosomal subunit biogenesis GTPase RsgA of Syntrophotalea carbinolica (strain DSM 2380 / NBRC 103641 / GraBd1) (Pelobacter carbinolicus).